Reading from the N-terminus, the 380-residue chain is Tryptophan 2,3-dioxygenase (380 aa).

Substrate is bound by residues 57–61 (FIITH) and arginine 128. Histidine 313 lines the heme pocket. Threonine 328 contributes to the substrate binding site.

This sequence belongs to the tryptophan 2,3-dioxygenase family. In terms of assembly, homotetramer. Dimer of dimers. Heme serves as cofactor.

The enzyme catalyses L-tryptophan + O2 = N-formyl-L-kynurenine. It participates in amino-acid degradation; L-tryptophan degradation via kynurenine pathway; L-kynurenine from L-tryptophan: step 1/2. The protein operates within pigment biosynthesis; ommochrome biosynthesis. Functionally, heme-dependent dioxygenase that catalyzes the oxidative cleavage of the L-tryptophan (L-Trp) pyrrole ring and converts L-tryptophan to N-formyl-L-kynurenine. Catalyzes the oxidative cleavage of the indole moiety. This is Tryptophan 2,3-dioxygenase from Drosophila willistoni (Fruit fly).